Here is a 194-residue protein sequence, read N- to C-terminus: Orotate phosphoribosyltransferase (194 aa).

5-phospho-alpha-D-ribose 1-diphosphate is bound at residue 116-124 (EDIVTTGLS). Orotate contacts are provided by Thr-120 and Arg-148.

The protein belongs to the purine/pyrimidine phosphoribosyltransferase family. PyrE subfamily. Homodimer. The cofactor is Mg(2+).

It carries out the reaction orotidine 5'-phosphate + diphosphate = orotate + 5-phospho-alpha-D-ribose 1-diphosphate. It functions in the pathway pyrimidine metabolism; UMP biosynthesis via de novo pathway; UMP from orotate: step 1/2. Its function is as follows. Catalyzes the transfer of a ribosyl phosphate group from 5-phosphoribose 1-diphosphate to orotate, leading to the formation of orotidine monophosphate (OMP). The chain is Orotate phosphoribosyltransferase from Phenylobacterium zucineum (strain HLK1).